We begin with the raw amino-acid sequence, 516 residues long: MLNAAGGAGCDPSSPTATSPMRILILLLAAALAGAFTLFAFAPYRLFWLMPLCLAALVELLQREPRRAFWLGYAWGLGAYVSNFRWIYDSLHDVAGLPAWIAAPLVLLLPAYLALYPGLASWLACRIDPRPGVRWLLAFPAAWELGEWLRGWVMTGFPWGAAGYSQITESPLAGYAPLGGIHLVNYLVALSAAALAMLARAGMRQRIGILIAAALAWGSGVWLRDIEWTTPAGKPITVALAQGNIAQELKWSPENLENSLLTYYRQVAMTRADLMILPETALPLFLDDLPSGYLSMMRGEASRAGMALASGIPRRTDDGRGYLNSVVALSDPKMPYYAKDHLVPFGEFVPLPGLIGWIYQHMDMPLSGFTRGGADQPPLTLAGQKVAFNVCYEDSFGEELIGPASRAGMLANVSNLAWFGKSEAMSQHLQLSQARSLETGRYMLRATNNGMTAIIRPDGEISAVAAPFTAQVLTGFAQSRQGLTPYMRFGNLPVVLGCGALLLLALLLGWRRRGQH.

The next 5 helical transmembrane spans lie at 23-43 (ILIL…AFAP), 68-88 (AFWL…RWIY), 94-114 (VAGL…AYLA), 135-155 (WLLA…WVMT), and 178-198 (LGGI…LAML). Residues 241 to 481 (AQGNIAQELK…VLTGFAQSRQ (241 aa)) enclose the CN hydrolase domain. Glu-279 serves as the catalytic Proton acceptor. Residue Lys-339 is part of the active site. Catalysis depends on Cys-391, which acts as the Nucleophile. The chain crosses the membrane as a helical span at residues 489–509 (FGNLPVVLGCGALLLLALLLG).

The protein belongs to the CN hydrolase family. Apolipoprotein N-acyltransferase subfamily.

It localises to the cell inner membrane. The enzyme catalyses N-terminal S-1,2-diacyl-sn-glyceryl-L-cysteinyl-[lipoprotein] + a glycerophospholipid = N-acyl-S-1,2-diacyl-sn-glyceryl-L-cysteinyl-[lipoprotein] + a 2-acyl-sn-glycero-3-phospholipid + H(+). It functions in the pathway protein modification; lipoprotein biosynthesis (N-acyl transfer). Functionally, catalyzes the phospholipid dependent N-acylation of the N-terminal cysteine of apolipoprotein, the last step in lipoprotein maturation. The sequence is that of Apolipoprotein N-acyltransferase from Chromobacterium violaceum (strain ATCC 12472 / DSM 30191 / JCM 1249 / CCUG 213 / NBRC 12614 / NCIMB 9131 / NCTC 9757 / MK).